The primary structure comprises 107 residues: MPGGYGVMGDDGAMDYSVHEAWNEATNVYLVVILVSFGLFMYAKRNKRKIMRIFSLPPPAETLSEPNFYDTISKIRLRQQLEMYSISRKYDYQQPQSQADSVQLSLE.

The chain crosses the membrane as a helical span at residues 20-42; the sequence is EAWNEATNVYLVVILVSFGLFMY.

Belongs to the SMIM19 family.

The protein resides in the membrane. This chain is Small integral membrane protein 19 (SMIM19), found in Bos taurus (Bovine).